The sequence spans 99 residues: Co-chaperonin GroES (99 aa).

Belongs to the GroES chaperonin family. In terms of assembly, heptamer of 7 subunits arranged in a ring. Interacts with the chaperonin GroEL.

Its subcellular location is the cytoplasm. Its function is as follows. Together with the chaperonin GroEL, plays an essential role in assisting protein folding. The GroEL-GroES system forms a nano-cage that allows encapsulation of the non-native substrate proteins and provides a physical environment optimized to promote and accelerate protein folding. GroES binds to the apical surface of the GroEL ring, thereby capping the opening of the GroEL channel. This is Co-chaperonin GroES from Corynebacterium jeikeium (strain K411).